The chain runs to 574 residues: 2-succinyl-5-enolpyruvyl-6-hydroxy-3-cyclohexene-1-carboxylate synthase (574 aa).

It belongs to the TPP enzyme family. MenD subfamily. In terms of assembly, homodimer. Mg(2+) is required as a cofactor. It depends on Mn(2+) as a cofactor. Thiamine diphosphate serves as cofactor.

It carries out the reaction isochorismate + 2-oxoglutarate + H(+) = 5-enolpyruvoyl-6-hydroxy-2-succinyl-cyclohex-3-ene-1-carboxylate + CO2. The protein operates within quinol/quinone metabolism; 1,4-dihydroxy-2-naphthoate biosynthesis; 1,4-dihydroxy-2-naphthoate from chorismate: step 2/7. It participates in quinol/quinone metabolism; menaquinone biosynthesis. Its function is as follows. Catalyzes the thiamine diphosphate-dependent decarboxylation of 2-oxoglutarate and the subsequent addition of the resulting succinic semialdehyde-thiamine pyrophosphate anion to isochorismate to yield 2-succinyl-5-enolpyruvyl-6-hydroxy-3-cyclohexene-1-carboxylate (SEPHCHC). The sequence is that of 2-succinyl-5-enolpyruvyl-6-hydroxy-3-cyclohexene-1-carboxylate synthase from Vibrio atlanticus (strain LGP32) (Vibrio splendidus (strain Mel32)).